Reading from the N-terminus, the 431-residue chain is Glutamate-1-semialdehyde 2,1-aminomutase (431 aa).

Residue K269 is modified to N6-(pyridoxal phosphate)lysine.

It belongs to the class-III pyridoxal-phosphate-dependent aminotransferase family. HemL subfamily. As to quaternary structure, homodimer. Pyridoxal 5'-phosphate is required as a cofactor.

It localises to the cytoplasm. It carries out the reaction (S)-4-amino-5-oxopentanoate = 5-aminolevulinate. It participates in porphyrin-containing compound metabolism; protoporphyrin-IX biosynthesis; 5-aminolevulinate from L-glutamyl-tRNA(Glu): step 2/2. This chain is Glutamate-1-semialdehyde 2,1-aminomutase, found in Francisella tularensis subsp. mediasiatica (strain FSC147).